A 683-amino-acid polypeptide reads, in one-letter code: Leishmanolysin-like peptidase (683 aa).

Histidine 257 is a binding site for Zn(2+). Glutamate 258 is a catalytic residue. Residues histidine 261 and histidine 364 each contribute to the Zn(2+) site.

This sequence belongs to the peptidase M8 family. The cofactor is Zn(2+).

It localises to the cytoplasm. In terms of biological role, essential for the coordination of mitotic progression, and also plays a role in cell migration. In Drosophila melanogaster (Fruit fly), this protein is Leishmanolysin-like peptidase (Invadolysin).